Reading from the N-terminus, the 155-residue chain is Fibroblast growth factor 2 (155 aa).

The propeptide occupies 1 to 9 (MAAGSITTL). The span at 1–11 (MAAGSITTLPT) shows a compositional bias: polar residues. Residues 1 to 24 (MAAGSITTLPTESEDGGNTPFSPG) form a disordered region. Heparin is bound by residues 27 to 31 (KDPKR) and 116 to 119 (RSRK).

This sequence belongs to the heparin-binding growth factors family.

Its subcellular location is the secreted. The protein localises to the nucleus. Functionally, acts as a ligand for FGFR1, FGFR2, FGFR3 and FGFR4. Also acts as an integrin ligand which is required for FGF2 signaling. Plays an important role in the regulation of cell survival, cell division, cell differentiation and cell migration. Functions as a potent mitogen in vitro. Can induce angiogenesis. The polypeptide is Fibroblast growth factor 2 (fgf2) (Xenopus laevis (African clawed frog)).